Reading from the N-terminus, the 133-residue chain is Ribosome-binding factor A (133 aa).

Belongs to the RbfA family. Monomer. Binds 30S ribosomal subunits, but not 50S ribosomal subunits or 70S ribosomes.

It is found in the cytoplasm. In terms of biological role, one of several proteins that assist in the late maturation steps of the functional core of the 30S ribosomal subunit. Associates with free 30S ribosomal subunits (but not with 30S subunits that are part of 70S ribosomes or polysomes). Required for efficient processing of 16S rRNA. May interact with the 5'-terminal helix region of 16S rRNA. The protein is Ribosome-binding factor A of Acinetobacter baumannii (strain AB307-0294).